Reading from the N-terminus, the 121-residue chain is Putative membrane protein insertion efficiency factor (121 aa).

Residues 97-121 are disordered; it reads VPARRDRHAGGRRCCPANVDEQRST.

Belongs to the UPF0161 family.

It localises to the cell membrane. Functionally, could be involved in insertion of integral membrane proteins into the membrane. This chain is Putative membrane protein insertion efficiency factor, found in Rhodococcus jostii (strain RHA1).